A 129-amino-acid chain; its full sequence is Small ribosomal subunit protein uS11 (129 aa).

This sequence belongs to the universal ribosomal protein uS11 family. As to quaternary structure, part of the 30S ribosomal subunit. Interacts with proteins S7 and S18. Binds to IF-3.

Functionally, located on the platform of the 30S subunit, it bridges several disparate RNA helices of the 16S rRNA. Forms part of the Shine-Dalgarno cleft in the 70S ribosome. The protein is Small ribosomal subunit protein uS11 of Geobacillus sp. (strain WCH70).